Here is a 412-residue protein sequence, read N- to C-terminus: Divalent metal cation transporter MntH (412 aa).

At 1 to 19 (MTNYRVESSSGRAARKMRL) the chain is on the cytoplasmic side. The helical transmembrane segment at 20 to 39 (ALMGPAFIAAIGYIDPGNFA) threads the bilayer. Over 40-51 (TNIQAGASFGYQ) the chain is Periplasmic. The chain crosses the membrane as a helical span at residues 52–71 (LLWVVVWANLMAMLIQILSA). Residues 72 to 95 (KLGIATGKNLAEQIRDHYPRPVVW) are Cytoplasmic-facing. A helical membrane pass occupies residues 96 to 118 (FYWVQAEIIAMATDLAEFIGAAI). The Periplasmic portion of the chain corresponds to 119-125 (GFKLILG). Residues 126–145 (VSLLQGAVLTGIATFLILML) traverse the membrane as a helical segment. Over 146-155 (QRRGQKPLEK) the chain is Cytoplasmic. The helical transmembrane segment at 156–175 (VIGGLLLFVAAAYIVELIFS) threads the bilayer. Residues 176–196 (QPNLAQLGKGMVIPSLPTSEA) are Periplasmic-facing. The chain crosses the membrane as a helical span at residues 197–220 (VFLAAGVLGATIMPHVIYLHSSLT). The Cytoplasmic segment spans residues 221 to 238 (QHLHGGSRQQRYSATKWD). The helical transmembrane segment at 239–258 (VAIAMTIAGFVNLAMMATAA) threads the bilayer. At 259 to 276 (AAFHFSGHTGVADLDEAY) the chain is on the periplasmic side. The helical transmembrane segment at 277–297 (LTLQPLLSHAAATVFGLSLVA) threads the bilayer. Residues 298 to 327 (AGLSSTVVGTLAGQVVMQGFIRFHIPLWVR) are Cytoplasmic-facing. The helical transmembrane segment at 328 to 344 (RTVTMLPSFIVILMGLD) threads the bilayer. At 345–350 (PTRILV) the chain is on the periplasmic side. The chain crosses the membrane as a helical span at residues 351 to 370 (MSQVLLSFGIALALVPLLIF). The Cytoplasmic portion of the chain corresponds to 371–387 (TSDSKLMGDLVNSKRVK). Residues 388-406 (QTGWVIVVLVVALNIWLLV) form a helical membrane-spanning segment. Residues 407-412 (GTALGL) lie on the Periplasmic side of the membrane.

The protein belongs to the NRAMP family.

It localises to the cell inner membrane. H(+)-stimulated, divalent metal cation uptake system. In Escherichia fergusonii (strain ATCC 35469 / DSM 13698 / CCUG 18766 / IAM 14443 / JCM 21226 / LMG 7866 / NBRC 102419 / NCTC 12128 / CDC 0568-73), this protein is Divalent metal cation transporter MntH.